The sequence spans 78 residues: Acyl carrier protein (78 aa).

The Carrier domain maps to S2–L77. An O-(pantetheine 4'-phosphoryl)serine modification is found at S37.

The protein belongs to the acyl carrier protein (ACP) family. 4'-phosphopantetheine is transferred from CoA to a specific serine of apo-ACP by AcpS. This modification is essential for activity because fatty acids are bound in thioester linkage to the sulfhydryl of the prosthetic group.

The protein resides in the cytoplasm. It functions in the pathway lipid metabolism; fatty acid biosynthesis. Its function is as follows. Carrier of the growing fatty acid chain in fatty acid biosynthesis. This chain is Acyl carrier protein, found in Cellvibrio japonicus (strain Ueda107) (Pseudomonas fluorescens subsp. cellulosa).